Here is a 405-residue protein sequence, read N- to C-terminus: Argininosuccinate synthase (405 aa).

Residues 10–18 (AYSGGLDTS) and Ala-37 each bind ATP. 2 residues coordinate L-citrulline: Tyr-88 and Ser-93. Gly-118 lines the ATP pocket. Thr-120, Asn-124, and Asp-125 together coordinate L-aspartate. Asn-124 provides a ligand contact to L-citrulline. L-citrulline-binding residues include Arg-128, Ser-179, Ser-188, Glu-264, and Tyr-276.

It belongs to the argininosuccinate synthase family. Type 1 subfamily. Homotetramer.

The protein localises to the cytoplasm. The catalysed reaction is L-citrulline + L-aspartate + ATP = 2-(N(omega)-L-arginino)succinate + AMP + diphosphate + H(+). It participates in amino-acid biosynthesis; L-arginine biosynthesis; L-arginine from L-ornithine and carbamoyl phosphate: step 2/3. In Pseudomonas syringae pv. syringae (strain B728a), this protein is Argininosuccinate synthase.